We begin with the raw amino-acid sequence, 142 residues long: Large ribosomal subunit protein uL13 (142 aa).

It belongs to the universal ribosomal protein uL13 family. In terms of assembly, part of the 50S ribosomal subunit.

Its function is as follows. This protein is one of the early assembly proteins of the 50S ribosomal subunit, although it is not seen to bind rRNA by itself. It is important during the early stages of 50S assembly. The sequence is that of Large ribosomal subunit protein uL13 from Chromobacterium violaceum (strain ATCC 12472 / DSM 30191 / JCM 1249 / CCUG 213 / NBRC 12614 / NCIMB 9131 / NCTC 9757 / MK).